A 144-amino-acid chain; its full sequence is NADH dehydrogenase [ubiquinone] 1 alpha subcomplex subunit 13 (144 aa).

A2 carries the post-translational modification N-acetylalanine. A helical transmembrane segment spans residues 30 to 51 (LSGYSMLAIGIGTLIYGHWSIM).

It belongs to the complex I NDUFA13 subunit family. Complex I is composed of 45 different subunits. Interacts with CARD15, but not with CARD4. Interacts with STAT3, but not with STAT1, STAT2 and STAT5A. Interacts with OLFM4.

The protein localises to the mitochondrion inner membrane. It is found in the nucleus. Its function is as follows. Accessory subunit of the mitochondrial membrane respiratory chain NADH dehydrogenase (Complex I), that is believed not to be involved in catalysis. Complex I functions in the transfer of electrons from NADH to the respiratory chain. The immediate electron acceptor for the enzyme is believed to be ubiquinone. Involved in the interferon/all-trans-retinoic acid (IFN/RA) induced cell death. This apoptotic activity is inhibited by interaction with viral IRF1. Prevents the transactivation of STAT3 target genes. May play a role in CARD15-mediated innate mucosal responses and serve to regulate intestinal epithelial cell responses to microbes. The sequence is that of NADH dehydrogenase [ubiquinone] 1 alpha subcomplex subunit 13 (NDUFA13) from Pan troglodytes (Chimpanzee).